Consider the following 180-residue polypeptide: Dual-action ribosomal maturation protein DarP (180 aa).

This sequence belongs to the DarP family.

The protein resides in the cytoplasm. Its function is as follows. Member of a network of 50S ribosomal subunit biogenesis factors which assembles along the 30S-50S interface, preventing incorrect 23S rRNA structures from forming. Promotes peptidyl transferase center (PTC) maturation. The polypeptide is Dual-action ribosomal maturation protein DarP (Chromobacterium violaceum (strain ATCC 12472 / DSM 30191 / JCM 1249 / CCUG 213 / NBRC 12614 / NCIMB 9131 / NCTC 9757 / MK)).